A 154-amino-acid polypeptide reads, in one-letter code: MVLKVKMGDIGVGKSPDSIETLLGSCVAIILYDRGKKIGGLAHIMLPKSRESDSKSPGKYADTAVPELLERLVKLGARRDKLVAKIAGGAAMFKANTNSIDVGKKNIDASKDELKKVGLRVSSEDTGGESGRTVVLSLKDGNVTIRKGNEVKNI.

The protein belongs to the CheD family.

The enzyme catalyses L-glutaminyl-[protein] + H2O = L-glutamyl-[protein] + NH4(+). In terms of biological role, probably deamidates glutamine residues to glutamate on methyl-accepting chemotaxis receptors (MCPs), playing an important role in chemotaxis. This chain is Probable chemoreceptor glutamine deamidase CheD, found in Methanococcus vannielii (strain ATCC 35089 / DSM 1224 / JCM 13029 / OCM 148 / SB).